Reading from the N-terminus, the 384-residue chain is uncharacterized protein (384 aa).

It to S.pombe SpAC2E11.17.

This is an uncharacterized protein from Schizosaccharomyces pombe (strain 972 / ATCC 24843) (Fission yeast).